Reading from the N-terminus, the 426-residue chain is Glucose-6-phosphate isomerase (426 aa).

Catalysis depends on E282, which acts as the Proton donor. Active-site residues include H303 and K417.

Belongs to the GPI family.

The protein localises to the cytoplasm. It carries out the reaction alpha-D-glucose 6-phosphate = beta-D-fructose 6-phosphate. It functions in the pathway carbohydrate biosynthesis; gluconeogenesis. It participates in carbohydrate degradation; glycolysis; D-glyceraldehyde 3-phosphate and glycerone phosphate from D-glucose: step 2/4. In terms of biological role, catalyzes the reversible isomerization of glucose-6-phosphate to fructose-6-phosphate. This is Glucose-6-phosphate isomerase from Onion yellows phytoplasma (strain OY-M).